The sequence spans 125 residues: Large ribosomal subunit protein bL12 (125 aa).

This sequence belongs to the bacterial ribosomal protein bL12 family. In terms of assembly, homodimer. Part of the ribosomal stalk of the 50S ribosomal subunit. Forms a multimeric L10(L12)X complex, where L10 forms an elongated spine to which 2 to 4 L12 dimers bind in a sequential fashion. Binds GTP-bound translation factors.

In terms of biological role, forms part of the ribosomal stalk which helps the ribosome interact with GTP-bound translation factors. Is thus essential for accurate translation. The chain is Large ribosomal subunit protein bL12 from Polaromonas naphthalenivorans (strain CJ2).